The chain runs to 384 residues: Histidinol-phosphate aminotransferase (384 aa).

N6-(pyridoxal phosphate)lysine is present on K223.

It belongs to the class-II pyridoxal-phosphate-dependent aminotransferase family. Requires pyridoxal 5'-phosphate as cofactor.

It carries out the reaction L-histidinol phosphate + 2-oxoglutarate = 3-(imidazol-4-yl)-2-oxopropyl phosphate + L-glutamate. The protein operates within amino-acid biosynthesis; L-histidine biosynthesis; L-histidine from 5-phospho-alpha-D-ribose 1-diphosphate: step 7/9. The polypeptide is Histidinol-phosphate aminotransferase (his3) (Schizosaccharomyces pombe (strain 972 / ATCC 24843) (Fission yeast)).